The chain runs to 115 residues: Nucleoid-associated protein NATL1_00191 (115 aa).

Positions 89–115 are disordered; that stretch reads STSTMKERMEDLTGGFKLNLPGMGEES.

It belongs to the YbaB/EbfC family. In terms of assembly, homodimer.

It is found in the cytoplasm. The protein resides in the nucleoid. Functionally, binds to DNA and alters its conformation. May be involved in regulation of gene expression, nucleoid organization and DNA protection. This Prochlorococcus marinus (strain NATL1A) protein is Nucleoid-associated protein NATL1_00191.